The primary structure comprises 460 residues: Phosphoenolpyruvate carboxylase (460 aa).

The protein belongs to the PEPCase type 2 family. As to quaternary structure, homotetramer. Mg(2+) is required as a cofactor.

It carries out the reaction oxaloacetate + phosphate = phosphoenolpyruvate + hydrogencarbonate. Its function is as follows. Catalyzes the irreversible beta-carboxylation of phosphoenolpyruvate (PEP) to form oxaloacetate (OAA), a four-carbon dicarboxylic acid source for the tricarboxylic acid cycle. The chain is Phosphoenolpyruvate carboxylase from Pyrobaculum aerophilum (strain ATCC 51768 / DSM 7523 / JCM 9630 / CIP 104966 / NBRC 100827 / IM2).